The chain runs to 309 residues: MVKVYAPASSANMSVGFDVLGAAVTPVDGTLLGDVVSVEAANHFRLHNLGRFADKLPPEPRENIVYQCWERFCQALGKTIPVAMTLEKNMPIGSGLGSSACSVVAALVAMNEHCGKPLNDTRLLALMGELEGRISGSIHYDNVAPCFLGGMQLMIEENGIISQQVPGFDEWLWVLAYPGIKVSTAEARAILPAQYRRQDCIAHGRHLAGFIHACYSRQPQLAAALMKDVIAEPYRARLLPGFSQARQAVSEIGALASGISGSGPTLFALCDKPETAQRVADWLSKHYLQNQEGFVHICRLDTAGARVVG.

An ATP-binding site is contributed by 91 to 101 (PIGSGLGSSAC).

It belongs to the GHMP kinase family. Homoserine kinase subfamily.

The protein localises to the cytoplasm. The catalysed reaction is L-homoserine + ATP = O-phospho-L-homoserine + ADP + H(+). It functions in the pathway amino-acid biosynthesis; L-threonine biosynthesis; L-threonine from L-aspartate: step 4/5. Catalyzes the ATP-dependent phosphorylation of L-homoserine to L-homoserine phosphate. The chain is Homoserine kinase from Salmonella dublin (strain CT_02021853).